We begin with the raw amino-acid sequence, 940 residues long: Mitogen-activated protein kinase kinase kinase 10 (940 aa).

An SH3 domain is found at 16-81 (PAGPVWTAVF…PSNYVAPAAP (66 aa)). One can recognise a Protein kinase domain in the interval 98 to 360 (LQLEEIIGVG…GSILKQLEVI (263 aa)). Residues 104–112 (IGVGGFGKV) and Lys-125 each bind ATP. Asp-222 (proton acceptor) is an active-site residue. Position 258 is a phosphothreonine; by autocatalysis (Thr-258). The residue at position 262 (Ser-262) is a Phosphoserine; by autocatalysis and MAP4K1. 2 leucine-zipper regions span residues 384–405 (IQHM…EEEL) and 419–440 (LRRR…ELHL). Disordered regions lie at residues 490-599 (PTLD…MAPG), 687-734 (RAGD…GLAP), and 749-917 (STRS…QPTL). 3 positions are modified to phosphoserine: Ser-498, Ser-502, and Ser-506. Positions 501-511 (ASPPASPSIIP) are enriched in low complexity. Thr-552 carries the phosphothreonine modification. 2 stretches are compositionally biased toward basic and acidic residues: residues 560 to 572 (QKER…RLKA) and 687 to 698 (RAGDGEEQRRWL). Positions 765–775 (APSPPPSPLAP) are enriched in pro residues. Positions 822 to 840 (LRQREPLELTNHGPRDPLD) are enriched in basic and acidic residues. Position 843 is an omega-N-methylarginine (Arg-843). The span at 899 to 913 (PSRPDTPESPGPPSV) shows a compositional bias: pro residues.

It belongs to the protein kinase superfamily. STE Ser/Thr protein kinase family. MAP kinase kinase kinase subfamily. As to quaternary structure, homodimer. Interacts with SH3RF2. Mg(2+) is required as a cofactor. Post-translationally, autophosphorylation on serine and threonine residues within the activation loop plays a role in enzyme activation.

The catalysed reaction is L-seryl-[protein] + ATP = O-phospho-L-seryl-[protein] + ADP + H(+). The enzyme catalyses L-threonyl-[protein] + ATP = O-phospho-L-threonyl-[protein] + ADP + H(+). With respect to regulation, homodimerization via the leucine zipper domains is required for autophosphorylation and subsequent activation. Activates the JUN N-terminal pathway. In Mus musculus (Mouse), this protein is Mitogen-activated protein kinase kinase kinase 10 (Map3k10).